The chain runs to 153 residues: Ergochrome gene cluster protein CPUR_05425 (153 aa).

It functions in the pathway pigment biosynthesis. Its function is as follows. Part of the ergochrome gene cluster responsible for the typical purple-black color of the ergot sclerotia. The ergochrome gene cluster produces several ergot pigments including the yellow ergochrome secalonic acid and its derivatives, as well as the red anthraquinones endocrocin and clavorubin. The pathway begins with the synthesis of atrochrysone thioester by the polyketide synthase (PKS) CPUR_05437. The atrochrysone carboxyl ACP thioesterase CPUR_05436 then breaks the thioester bond and releases the atrochrysone carboxylic acid from CPUR_05437. The atrochrysone carboxylic acid is then converted to atrochrysone which is further transformed into emodin anthrone. The next step is performed by the anthrone oxygenase CPUR_05434 that catalyzes the oxidation of emodinanthrone to emodin. Emodin is further modified to yield monodictyphenone via several steps involving CPUR_05427, CPUR_05428, CPUR_05429 and CPUR_05430. The short chain dehydrogenase/reductase CPUR_05418 then catalyzes the C-5 ketoreduction to give the xanthone skeleton of the monomeric units. Ergochromes formation requires further dimerization steps of different xanthone units, probably catalyzed by the cytochrome P450 monooxygenase CPUR_05419. CPUR_05425, CPUR_05426 and CPUR_05431 are unique to Claviceps, thus it is likely that they are involved in further modification of xanthone units or in their dimerization. The yellow ergochromes and the red anthraquinone pigments endocrocin and clavorubin are products from the same PKS derived precursors and the latter are likely shunt products in the pathway of xanthone biosynthesis. It is proposed that atrochrysone carboxylic acid released from the PKS CPUR_05437 can also be converted to endocrocin anthrone which is further oxidized into endocrocin by CPUR_05435. Endocrocin could be then modified to clavorubin, possibly by CPUR_05423 and CPUR_05431. Clavorubin is the principal anthraquinone metabolite produced by the cluster with a much higher yield compared to endocrocin. This is Ergochrome gene cluster protein CPUR_05425 from Claviceps purpurea (strain 20.1) (Ergot fungus).